Reading from the N-terminus, the 430-residue chain is Adenylosuccinate synthetase (430 aa).

Residues 13–19 (GDEGKGK) and 41–43 (GHT) contribute to the GTP site. Residue D14 is the Proton acceptor of the active site. Mg(2+)-binding residues include D14 and G41. IMP-binding positions include 14-17 (DEGK), 39-42 (NAGH), T130, R144, Q225, T240, and R304. H42 acts as the Proton donor in catalysis. Position 300–306 (300–306 (ASTGRPR)) interacts with substrate. GTP is bound by residues R306, 332–334 (KLD), and 414–416 (STG).

It belongs to the adenylosuccinate synthetase family. In terms of assembly, homodimer. The cofactor is Mg(2+).

The protein localises to the cytoplasm. The catalysed reaction is IMP + L-aspartate + GTP = N(6)-(1,2-dicarboxyethyl)-AMP + GDP + phosphate + 2 H(+). Its pathway is purine metabolism; AMP biosynthesis via de novo pathway; AMP from IMP: step 1/2. Plays an important role in the de novo pathway of purine nucleotide biosynthesis. Catalyzes the first committed step in the biosynthesis of AMP from IMP. The sequence is that of Adenylosuccinate synthetase from Xylella fastidiosa (strain M23).